Here is a 323-residue protein sequence, read N- to C-terminus: Transcription factor MYB108 (323 aa).

2 consecutive HTH myb-type domains span residues 16-68 and 69-123; these read EMDL…LNYL and RPDV…QKHA. 2 DNA-binding regions (H-T-H motif) span residues 44 to 68 and 96 to 119; these read WNSL…LNYL and WSKI…RTRV.

As to quaternary structure, interacts with BOI, but not with BRG1. Post-translationally, ubiquitinated in vitro by BOI. As to expression, expressed specifically in flowers. Restricted to anthers in maturing flowers. Strongest expression in the vascular and connective tissue where the anther attaches to the filament. Not detected in pollen.

It is found in the nucleus. Its function is as follows. Transcription factor contributing to the regulation of stamen maturation and male fertility in response to jasmonate signaling. Required for correct timing of anther dehiscence. Acts as a negative regulator of abscisic acid-induced cell death. Not involved in the regulation of BOI. Regulated by MYB21 and at a lower level by MYB24. Negatively regulated by the proteasome in an SCF(COI1) E3 ubiquitin-protein ligase complex-dependent manner. The sequence is that of Transcription factor MYB108 (MYB108) from Arabidopsis thaliana (Mouse-ear cress).